An 832-amino-acid polypeptide reads, in one-letter code: Conserved oligomeric Golgi complex subunit 5 (832 aa).

Composition is skewed to pro residues over residues 1–11 (MALPPSSPSPS) and 23–38 (NPPP…PPQT). The disordered stretch occupies residues 1–49 (MALPPSSPSPSSPSLQRLSTFKNPPPSSLSSGAPPPQTPSSSSSSPLDS). Positions 39–49 (PSSSSSSPLDS) are enriched in low complexity.

It belongs to the COG5 family. As to quaternary structure, homodimer. Component of the conserved oligomeric Golgi complex which is composed of eight different subunits and is required for normal Golgi morphology and localization. Interacts with COG3, COG6, COG7 and COG8.

Its subcellular location is the golgi apparatus membrane. Functionally, required for normal Golgi function. The polypeptide is Conserved oligomeric Golgi complex subunit 5 (Arabidopsis thaliana (Mouse-ear cress)).